The sequence spans 810 residues: Nuclear pore complex protein NUP88 (810 aa).

The segment at 1–23 (MKFNFNETEDAPDSRRSPTPKEP) is disordered. Residues 646 to 748 (APNLKRIIDD…RARVKKSTQK (103 aa)) adopt a coiled-coil conformation.

As to quaternary structure, part of the nuclear pore complex (NPC). The NPC has an eight-fold symmetrical structure comprising a central transport channel and two rings, the cytoplasmic and nuclear rings, to which eight filaments are attached. The cytoplasmic filaments have loose ends, while the nuclear filaments are joined in a distal ring, forming a nuclear basket. NPCs are highly dynamic in configuration and composition, and can be devided in 3 subcomplexes, the NUP62 subcomplex, the NUP107-160 subcomplex and the NUP93 subcomplex, containing approximately 30 different nucleoporin proteins.

The protein localises to the nucleus envelope. It localises to the nucleus. The protein resides in the nuclear pore complex. Functionally, involved in the regulation of exportin-mediated nuclear protein export. Required for resistance mediated by multiple R proteins and for the appropriate nuclear accumulation of SNC1 and of the downstream defense signaling components EDS1 and NPR1. Not involved in salt tolerance, ethylene and auxin responses, but required for systemic acquired resistance. This chain is Nuclear pore complex protein NUP88, found in Arabidopsis thaliana (Mouse-ear cress).